The primary structure comprises 546 residues: CTP synthase (546 aa).

The tract at residues 1-266 is amidoligase domain; that stretch reads MTTRYIFVTG…DQLVTKRFGI (266 aa). Serine 14 provides a ligand contact to CTP. Residue serine 14 participates in UTP binding. Residues 15–20 and aspartate 72 each bind ATP; that span reads SLGKGI. Residues aspartate 72 and glutamate 140 each coordinate Mg(2+). CTP-binding positions include 147–149, 187–192, and lysine 223; these read DIE and KTKPTQ. Residues 187-192 and lysine 223 contribute to the UTP site; that span reads KTKPTQ. ATP is bound at residue 239 to 241; the sequence is KDV. The region spanning 291–542 is the Glutamine amidotransferase type-1 domain; sequence TIGMVGKYIE…VAAAYTYQKR (252 aa). Residue glycine 352 participates in L-glutamine binding. Cysteine 379 serves as the catalytic Nucleophile; for glutamine hydrolysis. L-glutamine-binding positions include 380-383, glutamate 403, and arginine 470; that span reads LGMQ. Residues histidine 515 and glutamate 517 contribute to the active site.

It belongs to the CTP synthase family. As to quaternary structure, homotetramer.

The enzyme catalyses UTP + L-glutamine + ATP + H2O = CTP + L-glutamate + ADP + phosphate + 2 H(+). It carries out the reaction L-glutamine + H2O = L-glutamate + NH4(+). The catalysed reaction is UTP + NH4(+) + ATP = CTP + ADP + phosphate + 2 H(+). It participates in pyrimidine metabolism; CTP biosynthesis via de novo pathway; CTP from UDP: step 2/2. Its activity is regulated as follows. Allosterically activated by GTP, when glutamine is the substrate; GTP has no effect on the reaction when ammonia is the substrate. The allosteric effector GTP functions by stabilizing the protein conformation that binds the tetrahedral intermediate(s) formed during glutamine hydrolysis. Inhibited by the product CTP, via allosteric rather than competitive inhibition. In terms of biological role, catalyzes the ATP-dependent amination of UTP to CTP with either L-glutamine or ammonia as the source of nitrogen. Regulates intracellular CTP levels through interactions with the four ribonucleotide triphosphates. In Shewanella halifaxensis (strain HAW-EB4), this protein is CTP synthase.